Reading from the N-terminus, the 122-residue chain is Semaphorin-like protein A43 (122 aa).

Positions 1-122 (MIYLYTADNV…RIMYLFYEYH (122 aa)) constitute a Sema domain.

This sequence belongs to the semaphorin family.

The chain is Semaphorin-like protein A43 (A43R) from Homo sapiens (Human).